The sequence spans 256 residues: Tryptophan synthase alpha chain (256 aa).

Active-site proton acceptor residues include Glu45 and Asp56.

Belongs to the TrpA family. In terms of assembly, tetramer of two alpha and two beta chains.

The enzyme catalyses (1S,2R)-1-C-(indol-3-yl)glycerol 3-phosphate + L-serine = D-glyceraldehyde 3-phosphate + L-tryptophan + H2O. Its pathway is amino-acid biosynthesis; L-tryptophan biosynthesis; L-tryptophan from chorismate: step 5/5. Functionally, the alpha subunit is responsible for the aldol cleavage of indoleglycerol phosphate to indole and glyceraldehyde 3-phosphate. This is Tryptophan synthase alpha chain from Christiangramia forsetii (strain DSM 17595 / CGMCC 1.15422 / KT0803) (Gramella forsetii).